We begin with the raw amino-acid sequence, 458 residues long: UDP-N-acetylmuramate--L-alanine ligase (458 aa).

G118–T124 lines the ATP pocket.

The protein belongs to the MurCDEF family.

It localises to the cytoplasm. It carries out the reaction UDP-N-acetyl-alpha-D-muramate + L-alanine + ATP = UDP-N-acetyl-alpha-D-muramoyl-L-alanine + ADP + phosphate + H(+). It functions in the pathway cell wall biogenesis; peptidoglycan biosynthesis. In terms of biological role, cell wall formation. This Clostridium botulinum (strain ATCC 19397 / Type A) protein is UDP-N-acetylmuramate--L-alanine ligase.